Here is a 322-residue protein sequence, read N- to C-terminus: TATA box-binding protein-associated factor RNA polymerase I subunit D (322 aa).

2 disordered regions span residues Met1–Pro70 and Phe82–Arg116. Ser23 is modified (phosphoserine). The span at Phe82–Gly107 shows a compositional bias: basic residues. Ser137 carries the post-translational modification Phosphoserine. Residues Tyr198–Asn219 form a disordered region. Ser232 is modified (phosphoserine). A compositionally biased stretch (basic and acidic residues) spans Phe257–Arg267. Residues Phe257–Lys276 are disordered.

In terms of assembly, component of the transcription factor SL1/TIF-IB complex, composed of TBP and at least TAF1A, TAF1B, TAF1C and TAF1D. Interacts with UBTF.

The protein localises to the nucleus. Its function is as follows. Component of the transcription factor SL1/TIF-IB complex, which is involved in the assembly of the PIC (preinitiation complex) during RNA polymerase I-dependent transcription. The rate of PIC formation probably is primarily dependent on the rate of association of SL1/TIF-IB with the rDNA promoter. SL1/TIF-IB is involved in stabilization of nucleolar transcription factor 1/UBTF on rDNA. Formation of SL1/TIF-IB excludes the association of TBP with TFIID subunits. In Mus musculus (Mouse), this protein is TATA box-binding protein-associated factor RNA polymerase I subunit D (Taf1d).